We begin with the raw amino-acid sequence, 321 residues long: Cilia- and flagella-associated protein 161 (321 aa).

The tract at residues 275–321 is disordered; sequence LSTMLDLPKPPAEDTRALEQEREQVSDPGARSTPDARGCVPQCTLPM. The segment covering 285 to 299 has biased composition (basic and acidic residues); sequence PAEDTRALEQEREQV.

As to quaternary structure, microtubule inner protein component of sperm flagellar doublet microtubules. Expressed in trachea multiciliated cells.

It localises to the cytoplasm. The protein resides in the cytoskeleton. Its subcellular location is the cilium axoneme. The protein localises to the flagellum axoneme. Functionally, microtubule inner protein (MIP) part of the dynein-decorated doublet microtubules (DMTs) in cilia axoneme, which is required for motile cilia beating. This Bos taurus (Bovine) protein is Cilia- and flagella-associated protein 161.